The sequence spans 458 residues: MSITKEFDTITAISTPLGEGAIGIVRLSGTDALAIAQSVFKGKNLEQVASHTINYGHIIDPKTGTIIDEVMVSVMLAPKTFTRENVVEINTHGGIAVTNEILQLLIRQGARMAEPGEFTKRAFLNGRVDLTQAEAVMDIIRAKTDKAMTIAVKQLDGSLSQLINDTRQEILNTLAQVEVNIDYPEYDDVEEMTTALLREKTQEFQSLLENLLRTAKRGKILREGLSTAIIGRPNVGKSSLLNNLLREDKAIVTDIAGTTRDVIEEYVNIKGVPLKLVDTAGIRETDDLVEQIGVERSKKALQEADLVLLVLNASEKLTDQDRALLNLSQGSNRIILLNKTDLEQKIELEQLPADLISISVLTNQNINLIEDRINQLFFDNAGLVEQDATYLSNARHISLIEKAVQSLEAVNDGLALGMPVDLLQVDLTRTWEILGEITGDAAPDELITQLFSQFCLGK.

(6S)-5-formyl-5,6,7,8-tetrahydrofolate is bound by residues R26, E88, and R127. Residues 224 to 378 (GLSTAIIGRP…IEDRINQLFF (155 aa)) enclose the TrmE-type G domain. N234 lines the K(+) pocket. Residues 234–239 (NVGKSS), 253–259 (TDIAGTT), and 278–281 (DTAG) contribute to the GTP site. Mg(2+) is bound at residue S238. Residues T253, I255, and T258 each contribute to the K(+) site. T259 is a Mg(2+) binding site. K458 provides a ligand contact to (6S)-5-formyl-5,6,7,8-tetrahydrofolate.

Belongs to the TRAFAC class TrmE-Era-EngA-EngB-Septin-like GTPase superfamily. TrmE GTPase family. In terms of assembly, homodimer. Heterotetramer of two MnmE and two MnmG subunits. The cofactor is K(+).

The protein localises to the cytoplasm. Functionally, exhibits a very high intrinsic GTPase hydrolysis rate. Involved in the addition of a carboxymethylaminomethyl (cmnm) group at the wobble position (U34) of certain tRNAs, forming tRNA-cmnm(5)s(2)U34. The chain is tRNA modification GTPase MnmE from Streptococcus pyogenes serotype M28 (strain MGAS6180).